A 160-amino-acid chain; its full sequence is Serine-protein kinase RsbW (160 aa).

It belongs to the anti-sigma-factor family.

The catalysed reaction is L-seryl-[protein] + ATP = O-phospho-L-seryl-[protein] + ADP + H(+). The enzyme catalyses L-threonyl-[protein] + ATP = O-phospho-L-threonyl-[protein] + ADP + H(+). In terms of biological role, negative regulator of sigma-B activity. Phosphorylates and inactivates its specific antagonist protein, RsbV. Upon phosphorylation of RsbV, RsbW is released and binds to sigma-B, thereby blocking its ability to form an RNA polymerase holoenzyme (E-sigma-B). The protein is Serine-protein kinase RsbW of Bacillus cereus (strain ATCC 10987 / NRS 248).